Consider the following 632-residue polypeptide: Chaperone protein DnaK (632 aa).

Position 198 is a phosphothreonine; by autocatalysis (threonine 198).

The protein belongs to the heat shock protein 70 family.

Its function is as follows. Acts as a chaperone. The sequence is that of Chaperone protein DnaK from Rhodopseudomonas palustris (strain BisB18).